The chain runs to 680 residues: MQQSPHSLQSQSLFASAVDSAVPLSNLQQTYAVIPRERPYTPLLDRVDSPADLKAFSTADLIALADELRLFVLYSAGQSGGHFGANLGVIELTIALHYLLDAPQDQIVWDVGHQAYAHKVLTGRRDRLGTIRSKAGLTAFPERAESVYDTFGVGHSSTSISAGLGMSLALRYQGRAQTVACIIGDGAMTGGMAFEAMNDAVQQDADLMVILNDNDMSISCSIGGFSRHLAMLWESGYQVDISDAGEPILCRRPDMQAFDRRKRHKKQRDVPQLEDNLFKAIGFTYFGPFDGHNIPELLRVLSLAKQVKGPVLVHIYTTKGKGFAPAELDPVGYHAIGSLPAEDDAPKIEKAAAKPSLKYSQVFGQFLCDKAVQDNKLLAITPAMEEGSGMIEFARQFPERFFDVAIAEQHAVTLAGGMATQGVKPIVAIYSTFLQRGYDQLIHDVALQNLDVMFAIDRAGLVGEDGATHAGVFDFAFLRCVPNMMIAAPKDENECYHLLNTCYEYQGCTAVRYPRGVGTGATITQPAQTYNIGKAVIESVLGEKDAPKKLALLAFGTMVATAQQAAEMIAKSPLLASSCQLHVVNMRWVKPLDTTLLEQLLLQGVTHIATLEEHTIMGGAGSAVNEYLLNDSAAFKNHRPAICNIGIPDRFVAHGSQSEQWADCGLDVEGVVNQLQQLLS.

Thiamine diphosphate-binding positions include His-113 and 154 to 156; that span reads GHS. Asp-185 provides a ligand contact to Mg(2+). Thiamine diphosphate-binding positions include 186–187, Asn-214, Phe-323, and Glu-408; that span reads GA. Asn-214 contacts Mg(2+).

It belongs to the transketolase family. DXPS subfamily. In terms of assembly, homodimer. It depends on Mg(2+) as a cofactor. Thiamine diphosphate serves as cofactor.

It carries out the reaction D-glyceraldehyde 3-phosphate + pyruvate + H(+) = 1-deoxy-D-xylulose 5-phosphate + CO2. The protein operates within metabolic intermediate biosynthesis; 1-deoxy-D-xylulose 5-phosphate biosynthesis; 1-deoxy-D-xylulose 5-phosphate from D-glyceraldehyde 3-phosphate and pyruvate: step 1/1. Its function is as follows. Catalyzes the acyloin condensation reaction between C atoms 2 and 3 of pyruvate and glyceraldehyde 3-phosphate to yield 1-deoxy-D-xylulose-5-phosphate (DXP). The chain is 1-deoxy-D-xylulose-5-phosphate synthase from Psychrobacter arcticus (strain DSM 17307 / VKM B-2377 / 273-4).